The following is a 261-amino-acid chain: [LysW]-aminoadipate/[LysW]-glutamate kinase (261 aa).

Substrate-binding positions include glycine 35–glycine 36, arginine 62, and asparagine 166.

The protein belongs to the acetylglutamate kinase family. LysZ subfamily.

It is found in the cytoplasm. It catalyses the reaction [amino-group carrier protein]-C-terminal-N-(1,4-dicarboxybutan-1-yl)-L-glutamine + ATP = [amino-group carrier protein]-C-terminal-N-(1-carboxy-5-phosphooxy-5-oxopentan-1-yl)-L-glutamine + ADP. The catalysed reaction is [amino-group carrier protein]-C-terminal-gamma-(L-glutamyl)-L-glutamate + ATP = [amino-group carrier protein]-C-terminal-gamma-(5-phospho-L-glutamyl)-L-glutamate + ADP. It functions in the pathway amino-acid biosynthesis; L-lysine biosynthesis via AAA pathway; L-lysine from L-alpha-aminoadipate (Thermus route): step 2/5. The protein operates within amino-acid biosynthesis; L-arginine biosynthesis. In terms of biological role, involved in both the arginine and lysine biosynthetic pathways. Phosphorylates the LysW-bound precursors glutamate (for arginine biosynthesis), respectively alpha-aminoadipate (for lysine biosynthesis). The protein is [LysW]-aminoadipate/[LysW]-glutamate kinase of Sulfurisphaera tokodaii (strain DSM 16993 / JCM 10545 / NBRC 100140 / 7) (Sulfolobus tokodaii).